A 426-amino-acid chain; its full sequence is Chaperone SurA (426 aa).

Positions 1–19 (MGRVLVTIFVLFWPIGSFA) are cleaved as a signal peptide. 2 consecutive PpiC domains span residues 169-270 (DAQY…KLLD) and 280-379 (VTQT…QVLD).

It is found in the periplasm. The enzyme catalyses [protein]-peptidylproline (omega=180) = [protein]-peptidylproline (omega=0). Chaperone involved in the correct folding and assembly of outer membrane proteins. Recognizes specific patterns of aromatic residues and the orientation of their side chains, which are found more frequently in integral outer membrane proteins. May act in both early periplasmic and late outer membrane-associated steps of protein maturation. The protein is Chaperone SurA of Nitrosococcus oceani (strain ATCC 19707 / BCRC 17464 / JCM 30415 / NCIMB 11848 / C-107).